The chain runs to 520 residues: UvrABC system protein C (520 aa).

The 79-residue stretch at 11–89 folds into the GIY-YIG domain; that stretch reads EEPGCYQFKD…IKKYQPKYNI (79 aa). The 36-residue stretch at 195 to 230 folds into the UVR domain; that stretch reads QDLIYDLRKEMETFAAAEEYEKALVIRDRIAAIENL.

Belongs to the UvrC family. Interacts with UvrB in an incision complex.

It localises to the cytoplasm. The UvrABC repair system catalyzes the recognition and processing of DNA lesions. UvrC both incises the 5' and 3' sides of the lesion. The N-terminal half is responsible for the 3' incision and the C-terminal half is responsible for the 5' incision. The sequence is that of UvrABC system protein C from Methanospirillum hungatei JF-1 (strain ATCC 27890 / DSM 864 / NBRC 100397 / JF-1).